The chain runs to 61 residues: Small ribosomal subunit protein uS14 (61 aa).

4 residues coordinate Zn(2+): Cys24, Cys27, Cys40, and Cys43.

Belongs to the universal ribosomal protein uS14 family. Zinc-binding uS14 subfamily. As to quaternary structure, part of the 30S ribosomal subunit. Contacts proteins S3 and S10. The cofactor is Zn(2+).

In terms of biological role, binds 16S rRNA, required for the assembly of 30S particles and may also be responsible for determining the conformation of the 16S rRNA at the A site. The sequence is that of Small ribosomal subunit protein uS14 from Geobacillus thermodenitrificans (strain NG80-2).